We begin with the raw amino-acid sequence, 351 residues long: MNVKEHVISLPRRVFVGHDIVYDISIYFSQLGVTPPFLIVTGTKYTKKIADKVIENLPKDAKYEVVEIDSATLDDVYMVEEVIKRISPSLLLGIGGGKVIDVTKYAAFRNSLEFVSIPTSPSHDGITSPFASIKGLQKPVSVKAKEPLAIIADIEILSLSPRRLINAGIGDTIGKIIAVRDWKLAAKLRGEYYGDYTASLALMSAKHAFQCTKIINKDIKYGVRMLMEALISSGVAMGMAGSTRPASGSEHLFAHAVELIHPEGILHGELVGLGTIIMAYLHGINWKIIRNRLKKIGFPVKAKDLGLSDEEVIKALTIAHTIRPERYTILGDRGLTWSSAEKIARVTKIID.

NAD(+) is bound by residues 97 to 101 (GKVID) and 119 to 122 (TSPS). D124 serves as a coordination point for substrate. Residue S128 coordinates NAD(+). A substrate-binding site is contributed by D171. Positions 171 and 251 each coordinate Zn(2+). Residue H255 participates in substrate binding. H267 is a binding site for Zn(2+).

It belongs to the glycerol-1-phosphate dehydrogenase family. Homodimer. It depends on Zn(2+) as a cofactor.

It is found in the cytoplasm. The catalysed reaction is sn-glycerol 1-phosphate + NAD(+) = dihydroxyacetone phosphate + NADH + H(+). It catalyses the reaction sn-glycerol 1-phosphate + NADP(+) = dihydroxyacetone phosphate + NADPH + H(+). It participates in membrane lipid metabolism; glycerophospholipid metabolism. In terms of biological role, catalyzes the NAD(P)H-dependent reduction of dihydroxyacetonephosphate (DHAP or glycerone phosphate) to glycerol 1-phosphate (G1P). The G1P thus generated is used as the glycerophosphate backbone of phospholipids in the cellular membranes of Archaea. The chain is Glycerol-1-phosphate dehydrogenase [NAD(P)+] from Saccharolobus solfataricus (strain ATCC 35092 / DSM 1617 / JCM 11322 / P2) (Sulfolobus solfataricus).